We begin with the raw amino-acid sequence, 993 residues long: NACHT, LRR and PYD domains-containing protein 14 (993 aa).

The region spanning Q81–E403 is the NACHT domain. ATP is bound at residue G87 to T94. LRR repeat units lie at residues D636–K657, K660–S680, S688–C708, S717–S738, R745–S765, T774–T795, S802–C822, N831–S852, and N859–C879.

The protein belongs to the NLRP family. Detected in adult ovary and testis. Detected in oocytes and in germ cell elements in seminiferous tubules in adult testis (at protein level).

It is found in the cytoplasm. Functionally, may be involved in inflammation and spermatogenesis. This Mus musculus (Mouse) protein is NACHT, LRR and PYD domains-containing protein 14 (Nlrp14).